Reading from the N-terminus, the 154-residue chain is Ecotin-like protein 2 (154 aa).

Belongs to the protease inhibitor I11 (ecotin) family.

In Leishmania braziliensis, this protein is Ecotin-like protein 2.